Consider the following 633-residue polypeptide: Kelch repeat and BTB domain-containing protein 11 (633 aa).

The segment at 1 to 118 (MENSVAPFVL…EDPPSRHEHA (118 aa)) is disordered. Over residues 35–60 (STAQTPCSLSASLCFSSGDDSPPQSR) the composition is skewed to polar residues. A compositionally biased stretch (low complexity) spans 61–73 (ASAAEGSEASPPS). Phosphoserine occurs at positions 70, 73, 92, 95, 107, and 113. In terms of domain architecture, BTB spans 146–206 (PDLVIEVAGR…AYSGRMAGVR (61 aa)). Kelch repeat units lie at residues 317 to 365 (RPQS…VLFN), 366 to 418 (YLFL…ALDG), 419 to 463 (HLYA…TCNG), and 465 to 506 (IYVS…ALDG).

This chain is Kelch repeat and BTB domain-containing protein 11 (Kbtbd11), found in Mus musculus (Mouse).